A 480-amino-acid polypeptide reads, in one-letter code: MVKICCIGAGYVGGPTMAVIALKCPAIEVVVVDISKPRIDAWNSEQLPIYEPGLDEVVKECRGRNLFFSTDVEKHVAEADIIFVSVNTPTKTRGLGAGKAADLTYWESAARMIADVSKSDKIVVEKSTVPVKTAEAIEKILTHNSKGINYQILSNPEFLAEGTAIDDLFKPDRVLIGGRETAEGRKAVQALKSVYAHWVPEDRIITTNLWSAELSKLAANAFLAQRISSVNAISALCEATGANVTEVAYAVGKDSRIGPKFLNASVGFGGSCFQKDILNLVYICECNGLPEVANYWKQVIKINDYQKSRFVNRVVSSMFNTVSGKKIAVLGFAFKKDTGDTRETPAIDVCHGLLGDKAQISIYDPQVTEDQIQRDLAMGKFDWDHPMHLQPTSPTAFKQVSVVWDAYEATKNAHGLCILTEWDEFKTLDYQKIYDNMQKPAFVFDGRNVVDPEKLREIGFIVYSIGKPLDAWLKDMPAVA.

Residues 8–13 (GAGYVG), Asp-33, Arg-38, 86–90 (VNTPT), 127–128 (ST), and Glu-161 contribute to the NAD(+) site. Residues 157-161 (EFLAE), 216-223 (KLAANAFL), and 256-269 (RIGP…VGFG) contribute to the substrate site. Residue Cys-272 is the Nucleophile of the active site. Residue 272 to 275 (CFQK) coordinates NAD(+). 334 to 335 (FK) is a binding site for substrate. Arg-342 serves as a coordination point for NAD(+). Ser-393 carries the post-translational modification Phosphoserine. A substrate-binding site is contributed by Arg-447.

This sequence belongs to the UDP-glucose/GDP-mannose dehydrogenase family.

It catalyses the reaction UDP-alpha-D-glucose + 2 NAD(+) + H2O = UDP-alpha-D-glucuronate + 2 NADH + 3 H(+). The protein operates within nucleotide-sugar biosynthesis; UDP-alpha-D-glucuronate biosynthesis; UDP-alpha-D-glucuronate from UDP-alpha-D-glucose: step 1/1. Involved in the biosynthesis of UDP-glucuronic acid (UDP-GlcA), providing nucleotide sugars for cell-wall polymers. The sequence is that of UDP-glucose 6-dehydrogenase 3 (UGD3) from Oryza sativa subsp. japonica (Rice).